A 277-amino-acid polypeptide reads, in one-letter code: Undecaprenyl-diphosphatase (277 aa).

The next 6 helical transmembrane spans lie at 44-64 (RAMA…VWEF), 86-106 (GNLL…ADLI), 110-130 (LFNP…MLWA), 184-204 (AATE…AVYS), 215-235 (GDLP…MIAV), and 250-270 (FAWY…FGWV).

The protein belongs to the UppP family.

The protein resides in the cell inner membrane. The enzyme catalyses di-trans,octa-cis-undecaprenyl diphosphate + H2O = di-trans,octa-cis-undecaprenyl phosphate + phosphate + H(+). Its function is as follows. Catalyzes the dephosphorylation of undecaprenyl diphosphate (UPP). Confers resistance to bacitracin. This Pseudomonas putida (strain ATCC 47054 / DSM 6125 / CFBP 8728 / NCIMB 11950 / KT2440) protein is Undecaprenyl-diphosphatase.